The chain runs to 320 residues: V-set and transmembrane domain-containing protein 4 (320 aa).

Positions 1–23 (MRLLALAAAALLARAPAPEVCAA) are cleaved as a signal peptide. Residues 24 to 155 (LNVTVSPGPV…SSATEMRVIS (132 aa)) enclose the Ig-like domain. The Extracellular portion of the chain corresponds to 24–180 (LNVTVSPGPV…WAFFEDLYVY (157 aa)). 4 N-linked (GlcNAc...) asparagine glycosylation sites follow: Asn-25, Asn-41, Asn-89, and Asn-144. Cys-46 and Cys-127 are disulfide-bonded. A helical membrane pass occupies residues 181–201 (AVLVCCVGILSILLFMLVIVW). Residues 202–320 (QSVFNKRKSR…AQILFEENKL (119 aa)) lie on the Cytoplasmic side of the membrane.

Proteolytically cleaved to generate a bioactive peptide.

It is found in the secreted. It localises to the cell membrane. Its function is as follows. Peptide Lv enhances L-type voltage-gated calcium channel (L-VGCC) currents in retinal photoreceptors. In Homo sapiens (Human), this protein is V-set and transmembrane domain-containing protein 4 (VSTM4).